A 244-amino-acid polypeptide reads, in one-letter code: MSAASGGFQPRERRFSVQEQDWETTPPKKLRLGAGSKCGGRRLIVVLEGASLETVKVGKTYELLNCDRHKSMLLKNGRDPGEVRPDITHQSLLMLMDSPLNRAGLLQVYIHTQKNVLIEVNPQTRIPRTFDRFCGLMVQLLHKLSVRAADGPQKLLKVIKNPVSDHFPVGCMKIGTSFSVEDISDIRELVPSSDPVVFVVGAFAHGKVSVEYTEKMVSISNYPLSAALTCAKVTTAFEEVWGVI.

The segment at 1–33 (MSAASGGFQPRERRFSVQEQDWETTPPKKLRLG) is disordered. Residues Ser5 and Ser16 each carry the phosphoserine modification. S-adenosyl-L-methionine contacts are provided by residues Thr176, Gly201, Gly206, and 219–224 (ISNYPL).

Belongs to the class IV-like SAM-binding methyltransferase superfamily. RNA methyltransferase NEP1 family. In terms of assembly, homodimer. Part of the small subunit (SSU) processome, composed of more than 70 proteins and the RNA chaperone small nucleolar RNA (snoRNA) U3.

The protein resides in the nucleus. The protein localises to the nucleolus. The catalysed reaction is pseudouridine(1248) in human 18S rRNA + S-adenosyl-L-methionine = N(1)-methylpseudouridine(1248) in human 18S rRNA + S-adenosyl-L-homocysteine + H(+). In terms of biological role, S-adenosyl-L-methionine-dependent pseudouridine N(1)-methyltransferase that methylates pseudouridine at position in 18S rRNA. Involved the biosynthesis of the hypermodified N1-methyl-N3-(3-amino-3-carboxypropyl) pseudouridine (m1acp3-Psi) conserved in eukaryotic 18S rRNA. Is not able to methylate uridine at this position. Also has an essential role in 40S ribosomal subunit biogenesis independent on its methyltransferase activity, facilitating the incorporation of ribosomal protein S19 during the formation of pre-ribosomes. Part of the small subunit (SSU) processome, first precursor of the small eukaryotic ribosomal subunit. During the assembly of the SSU processome in the nucleolus, many ribosome biogenesis factors, an RNA chaperone and ribosomal proteins associate with the nascent pre-rRNA and work in concert to generate RNA folding, modifications, rearrangements and cleavage as well as targeted degradation of pre-ribosomal RNA by the RNA exosome. This chain is Ribosomal RNA small subunit methyltransferase NEP1, found in Mus musculus (Mouse).